The sequence spans 301 residues: MNQIEKTGELSASRFTVRDFTELVKIGIVNSNTITAFTGMWLAFQLNGISFIQNVDVIFFTIVGSALIVAASGAFNNVIDRDIDGIMERTKNRPTMTGKISGKRALMVALVLGVVGTIMLFMTTWQAGVLGVIGVFLYVVVYSLYAKRKLVSNTVIGSFSGAVPPLIGWFAVEPTFSIVPIMLFLVMFCWQPPHFYAIAIKRKEEYAAAGIPMLPVVKGIERTKKSMFFWVILLTILPFFMFDLGIVYVILATLLNIGWLALSIYGFKMEDSIKWAKWMFVYSLNYMTILFVAMVVISIFL.

The next 9 helical transmembrane spans lie at 20 to 42 (FTELVKIGIVNSNTITAFTGMWL), 55 to 75 (VDVIFFTIVGSALIVAASGAF), 105 to 125 (ALMVALVLGVVGTIMLFMTTW), 126 to 146 (QAGVLGVIGVFLYVVVYSLYA), 150 to 172 (LVSNTVIGSFSGAVPPLIGWFAV), 176 to 198 (FSIVPIMLFLVMFCWQPPHFYAI), 227 to 247 (MFFWVILLTILPFFMFDLGIV), 249 to 269 (VILATLLNIGWLALSIYGFKM), and 280 to 300 (FVYSLNYMTILFVAMVVISIF).

The protein belongs to the UbiA prenyltransferase family. Protoheme IX farnesyltransferase subfamily. As to quaternary structure, interacts with CtaA.

The protein localises to the cell membrane. It catalyses the reaction heme b + (2E,6E)-farnesyl diphosphate + H2O = Fe(II)-heme o + diphosphate. The protein operates within porphyrin-containing compound metabolism; heme O biosynthesis; heme O from protoheme: step 1/1. Its function is as follows. Converts heme B (protoheme IX) to heme O by substitution of the vinyl group on carbon 2 of heme B porphyrin ring with a hydroxyethyl farnesyl side group. In Listeria monocytogenes serovar 1/2a (strain ATCC BAA-679 / EGD-e), this protein is Protoheme IX farnesyltransferase.